The sequence spans 78 residues: MAKEAEMEFEGTVVEVLPNAKFKVQLENDIVIDAHVSGKIRMHYIRILPGDKVTVVISPYDMTRGRITYRKIAKKAEV.

Residues 1–72 (MAKEAEMEFE…TRGRITYRKI (72 aa)) enclose the S1-like domain.

The protein belongs to the IF-1 family. Component of the 30S ribosomal translation pre-initiation complex which assembles on the 30S ribosome in the order IF-2 and IF-3, IF-1 and N-formylmethionyl-tRNA(fMet); mRNA recruitment can occur at any time during PIC assembly.

It localises to the cytoplasm. One of the essential components for the initiation of protein synthesis. Stabilizes the binding of IF-2 and IF-3 on the 30S subunit to which N-formylmethionyl-tRNA(fMet) subsequently binds. Helps modulate mRNA selection, yielding the 30S pre-initiation complex (PIC). Upon addition of the 50S ribosomal subunit IF-1, IF-2 and IF-3 are released leaving the mature 70S translation initiation complex. This Mesoplasma florum (strain ATCC 33453 / NBRC 100688 / NCTC 11704 / L1) (Acholeplasma florum) protein is Translation initiation factor IF-1.